The sequence spans 244 residues: uncharacterized protein (244 aa).

A WGR domain is found at 1 to 78 (MKKRFIYHDE…PKFNFMDRYY (78 aa)).

This is an uncharacterized protein from Escherichia coli (strain K12).